Reading from the N-terminus, the 529-residue chain is uncharacterized protein (529 aa).

The Nucleophile role is filled by Asp389. Glu392 is an active-site residue. Asp459 serves as the catalytic Proton donor.

Belongs to the glycosyl hydrolase 31 family.

This is an uncharacterized protein from Pseudescherichia vulneris (Escherichia vulneris).